We begin with the raw amino-acid sequence, 322 residues long: Tetraacyldisaccharide 4'-kinase (322 aa).

ATP is bound at residue 40-47 (CVGGTGKT).

This sequence belongs to the LpxK family.

It catalyses the reaction a lipid A disaccharide + ATP = a lipid IVA + ADP + H(+). The protein operates within glycolipid biosynthesis; lipid IV(A) biosynthesis; lipid IV(A) from (3R)-3-hydroxytetradecanoyl-[acyl-carrier-protein] and UDP-N-acetyl-alpha-D-glucosamine: step 6/6. Its function is as follows. Transfers the gamma-phosphate of ATP to the 4'-position of a tetraacyldisaccharide 1-phosphate intermediate (termed DS-1-P) to form tetraacyldisaccharide 1,4'-bis-phosphate (lipid IVA). The chain is Tetraacyldisaccharide 4'-kinase from Koribacter versatilis (strain Ellin345).